A 185-amino-acid polypeptide reads, in one-letter code: uncharacterized protein (185 aa).

It belongs to the PIGL family.

This is an uncharacterized protein from Escherichia coli (strain K12).